A 615-amino-acid polypeptide reads, in one-letter code: Putative binding protein BruAb2_0648 (615 aa).

The N-terminal stretch at 1-29 (MLNRFIAFFRSVFLIGLVATAFGALPARA) is a signal peptide.

The protein belongs to the bacterial solute-binding protein 5 family.

It is found in the periplasm. This Brucella abortus biovar 1 (strain 9-941) protein is Putative binding protein BruAb2_0648.